The following is a 168-amino-acid chain: uncharacterized protein (168 aa).

3 disordered regions span residues 37–74 (GGSK…SQFT), 81–100 (QYNY…PNYY), and 117–168 (MQPF…EETN). Composition is skewed to polar residues over residues 52–74 (HSGQ…SQFT) and 82–95 (YNYN…TRSV). A compositionally biased stretch (low complexity) spans 120-129 (FNNQSFNNQS). Over residues 130–158 (RTHQSKTYQHNQQKRSFNGPRNNGPQNNV) the composition is skewed to polar residues.

This is an uncharacterized protein from Acanthamoeba polyphaga (Amoeba).